Reading from the N-terminus, the 162-residue chain is Probable ergosterol biosynthetic protein 28 homolog (162 aa).

4 helical membrane-spanning segments follow: residues alanine 7–alanine 25, leucine 40–phenylalanine 60, isoleucine 69–tyrosine 89, and isoleucine 96–leucine 116.

It belongs to the ERG28 family. As to expression, expressed in tissues including muscles, intestine and neurons.

It localises to the endoplasmic reticulum membrane. It is found in the cell projection. The protein resides in the dendrite. Its function is as follows. Promotes the translocation of slo-1 potassium ion channels from the endoplasmic reticulum to its final destination at the plasma membrane, probably by shielding from premature proteasomal degradation in the endoplasmic reticulum. Maintains the levels of slo-1 potassium ion channel at the presynaptic neurons. The polypeptide is Probable ergosterol biosynthetic protein 28 homolog (Caenorhabditis elegans).